The chain runs to 485 residues: Glutamyl-tRNA(Gln) amidotransferase subunit A 1 (485 aa).

Residues Lys79 and Ser154 each act as charge relay system in the active site. The active-site Acyl-ester intermediate is Ser178.

This sequence belongs to the amidase family. GatA subfamily. In terms of assembly, heterotrimer of A, B and C subunits.

The catalysed reaction is L-glutamyl-tRNA(Gln) + L-glutamine + ATP + H2O = L-glutaminyl-tRNA(Gln) + L-glutamate + ADP + phosphate + H(+). Its function is as follows. Allows the formation of correctly charged Gln-tRNA(Gln) through the transamidation of misacylated Glu-tRNA(Gln) in organisms which lack glutaminyl-tRNA synthetase. The reaction takes place in the presence of glutamine and ATP through an activated gamma-phospho-Glu-tRNA(Gln). The sequence is that of Glutamyl-tRNA(Gln) amidotransferase subunit A 1 (gatA1) from Clostridium acetobutylicum (strain ATCC 824 / DSM 792 / JCM 1419 / IAM 19013 / LMG 5710 / NBRC 13948 / NRRL B-527 / VKM B-1787 / 2291 / W).